The sequence spans 133 residues: Large ribosomal subunit protein eL19 (133 aa).

Positions 55–83 (RGISGARKKPRRKGPGSRKGGKYSKLPRK) are disordered. Positions 60 to 83 (ARKKPRRKGPGSRKGGKYSKLPRK) are enriched in basic residues.

It belongs to the eukaryotic ribosomal protein eL19 family. Part of the 50S ribosomal subunit.

Binds to the 23S rRNA. The sequence is that of Large ribosomal subunit protein eL19 from Korarchaeum cryptofilum (strain OPF8).